The chain runs to 830 residues: Probable mixed-linked glucan synthase 7 (830 aa).

Transmembrane regions (helical) follow at residues leucine 61–alanine 81 and alanine 98–leucine 118. Aspartate 186 is a catalytic residue. Positions glutamate 251–arginine 279 form a coiled coil. Aspartate 367 and aspartate 369 together coordinate substrate. Aspartate 529 is a catalytic residue. A run of 6 helical transmembrane segments spans residues leucine 613–tryptophan 633, threonine 638–leucine 658, phenylalanine 676–valine 696, alanine 735–glycine 755, leucine 776–methionine 796, and proline 805–leucine 825.

This sequence belongs to the glycosyltransferase 2 family. Plant cellulose synthase-like F subfamily. In terms of tissue distribution, expressed in mature pollen.

The protein resides in the golgi apparatus membrane. Its function is as follows. May catalyze both beta-1,3 and beta-1,4 glycosidic linkage on beta-D-glucan. Essential for (1,3;1,4)-beta-D-glucans synthesis in grasses and cereals (Poaceae). The mixed-linked glucans (which are not present in walls of dicotyledons or most other monocotyledonous plants) are particularly important constituents of the walls of the starchy endosperm and aleurone cells of cereal grains such as oats, wheat, rice and barley. They can account for up to 70% by weight of the wall. In Oryza sativa subsp. japonica (Rice), this protein is Probable mixed-linked glucan synthase 7 (CSLF7).